Reading from the N-terminus, the 361-residue chain is Probable dual-specificity RNA methyltransferase RlmN (361 aa).

The active-site Proton acceptor is Glu91. In terms of domain architecture, Radical SAM core spans 97–329 (QHYGLSVCVT…KKKGGNCVVR (233 aa)). Cys104 and Cys340 are disulfide-bonded. Residues Cys111, Cys115, and Cys118 each coordinate [4Fe-4S] cluster. S-adenosyl-L-methionine is bound by residues 163-164 (GE), Ser195, 218-220 (SLH), and Asn296. Catalysis depends on Cys340, which acts as the S-methylcysteine intermediate.

It belongs to the radical SAM superfamily. RlmN family. [4Fe-4S] cluster is required as a cofactor.

It localises to the cytoplasm. The catalysed reaction is adenosine(2503) in 23S rRNA + 2 reduced [2Fe-2S]-[ferredoxin] + 2 S-adenosyl-L-methionine = 2-methyladenosine(2503) in 23S rRNA + 5'-deoxyadenosine + L-methionine + 2 oxidized [2Fe-2S]-[ferredoxin] + S-adenosyl-L-homocysteine. The enzyme catalyses adenosine(37) in tRNA + 2 reduced [2Fe-2S]-[ferredoxin] + 2 S-adenosyl-L-methionine = 2-methyladenosine(37) in tRNA + 5'-deoxyadenosine + L-methionine + 2 oxidized [2Fe-2S]-[ferredoxin] + S-adenosyl-L-homocysteine. Functionally, specifically methylates position 2 of adenine 2503 in 23S rRNA and position 2 of adenine 37 in tRNAs. This chain is Probable dual-specificity RNA methyltransferase RlmN, found in Streptococcus pneumoniae (strain Hungary19A-6).